A 283-amino-acid chain; its full sequence is MKDSHQTIGVFVRPTHHQNPLFSELTQAKEWVLRLLEDEGFESFMADDNGLKDERLIEKAYAFLCLGGDGTILGALRMMHSYNKPCFGVRMGNLGYLTAIELNELKDFLQNLKHNKIKLEEHLALEGRIEEISFYAINEIVITRKEALGILDIEACVSHTPFNTYKGDGLIIATPLGSTAYNLSAHGPIVHALNQSYVLTPLCDFSLTQRPLVLGAEFCLSFCANKDALVIIDGQATYDLKANQKLYIQKSPTTTKLLQKNSRDYFKVLKEKLLWGESSSKKN.

Catalysis depends on aspartate 69, which acts as the Proton acceptor. NAD(+) is bound by residues aspartate 69–glycine 70, asparagine 138–glutamate 139, lysine 166, aspartate 168, leucine 176, threonine 179–serine 184, and glutamine 235.

The protein belongs to the NAD kinase family. Requires a divalent metal cation as cofactor.

Its subcellular location is the cytoplasm. The enzyme catalyses NAD(+) + ATP = ADP + NADP(+) + H(+). Functionally, involved in the regulation of the intracellular balance of NAD and NADP, and is a key enzyme in the biosynthesis of NADP. Catalyzes specifically the phosphorylation on 2'-hydroxyl of the adenosine moiety of NAD to yield NADP. This Helicobacter acinonychis (strain Sheeba) protein is NAD kinase.